Here is a 99-residue protein sequence, read N- to C-terminus: Endothelin receptor type B (99 aa).

Topologically, residues Pro-1 to Lys-8 are extracellular. Cys-7 and Cys-88 are joined by a disulfide. Residues Leu-9–Ile-30 form a helical membrane-spanning segment. Residues Asp-31–Thr-51 lie on the Cytoplasmic side of the membrane. The chain crosses the membrane as a helical span at residues Ala-52–Ile-76. Topologically, residues Thr-77 to Met-99 are extracellular.

It belongs to the G-protein coupled receptor 1 family. Endothelin receptor subfamily. EDNRB sub-subfamily.

Its subcellular location is the cell membrane. In terms of biological role, non-specific receptor for endothelin 1, 2, and 3. Mediates its action by association with G proteins that activate a phosphatidylinositol-calcium second messenger system. The protein is Endothelin receptor type B (EDNRB) of Macaca fascicularis (Crab-eating macaque).